The sequence spans 293 residues: N(1)-aminopropylagmatine ureohydrolase (293 aa).

Mn(2+)-binding residues include H105, D128, H130, D132, D210, and D212.

This sequence belongs to the arginase family. The cofactor is Mn(2+).

It carries out the reaction N(1)-(3-aminopropyl)agmatine + H2O = urea + spermidine. Its pathway is amine and polyamine biosynthesis; spermidine biosynthesis. Involved in the biosynthesis of polyamines which are thought to support the growth of thermophilic microorganisms under high-temperature conditions. It seems that long-chain and branched-chain of polyamines effectively stabilize DNA and RNA, respectively. Catalyzes the decarboxylation of N1-(3-aminopropyl)agmatine to yield spermidine and urea. Does not act on agmatine. This chain is N(1)-aminopropylagmatine ureohydrolase, found in Thermus thermophilus (strain ATCC BAA-163 / DSM 7039 / HB27).